Here is a 279-residue protein sequence, read N- to C-terminus: High choriolytic enzyme 2 (279 aa).

A signal peptide spans 1–20 (MNLASSACLLLLFLLGIAQA). Positions 21-79 (LPVQNEEGHEEGNKEGHGEEGVEEGDEDDFVDFTTRILTSNNNTDQLLLEGDLVAPTNR) are cleaved as a propeptide — activation peptide. A compositionally biased stretch (basic and acidic residues) spans 26 to 40 (EEGHEEGNKEGHGEE). The tract at residues 26-46 (EEGHEEGNKEGHGEEGVEEGD) is disordered. N-linked (GlcNAc...) asparagine glycosylation is present at Asn-62. The Peptidase M12A domain occupies 80-279 (NAMKCWYNSC…TRSNVLYNCR (200 aa)). Cystine bridges form between Cys-84–Cys-89, Cys-129–Cys-278, and Cys-150–Cys-170. His-178 serves as a coordination point for Zn(2+). The active site involves Glu-179. His-182 and His-188 together coordinate Zn(2+).

Requires Zn(2+) as cofactor.

It localises to the zymogen granule. The catalysed reaction is Hydrolysis of the inner layer of fish egg envelope. Also hydrolysis of casein and small molecule substrates such as succinyl-Leu-Leu-Val-Tyr-|-7-(4-methyl)coumarylamide.. In terms of biological role, participates in the breakdown of the egg envelope, which is derived from the egg extracellular matrix, at the time of hatching. Thus allowing the newly hatched fish to swim free. HCE binds tightly to the egg envelope while it exerts the choriolytic swelling action. The chain is High choriolytic enzyme 2 (hceb) from Oryzias latipes (Japanese rice fish).